Reading from the N-terminus, the 323-residue chain is DNA-directed RNA polymerase subunit alpha (323 aa).

The segment at 1–225 (MLDIAMPKIE…QYSQTIADFN (225 aa)) is alpha N-terminal domain (alpha-NTD). The tract at residues 243-323 (PADIYDTPIE…TNSSPAGIES (81 aa)) is alpha C-terminal domain (alpha-CTD).

It belongs to the RNA polymerase alpha chain family. As to quaternary structure, homodimer. The RNAP catalytic core consists of 2 alpha, 1 beta, 1 beta' and 1 omega subunit. When a sigma factor is associated with the core the holoenzyme is formed, which can initiate transcription.

It catalyses the reaction RNA(n) + a ribonucleoside 5'-triphosphate = RNA(n+1) + diphosphate. Functionally, DNA-dependent RNA polymerase catalyzes the transcription of DNA into RNA using the four ribonucleoside triphosphates as substrates. The polypeptide is DNA-directed RNA polymerase subunit alpha (Roseiflexus castenholzii (strain DSM 13941 / HLO8)).